The following is a 404-amino-acid chain: Ribosomal RNA large subunit methyltransferase F (404 aa).

2 stretches are compositionally biased toward basic residues: residues 1 to 10 (MTKHSQKQNR) and 18 to 29 (QTRRKKPAGKLK). Disordered stretches follow at residues 1 to 54 (MTKH…HERN), 156 to 177 (GTRQ…QRYK), and 289 to 308 (RAAK…PDAN). The segment covering 30 to 54 (AKSEAKLDTRGKPETTEKKGLHERN) has biased composition (basic and acidic residues). Polar residues predominate over residues 157 to 172 (TRQNVPYASKPESSAP).

The protein belongs to the methyltransferase superfamily. METTL16/RlmF family.

The protein localises to the cytoplasm. It catalyses the reaction adenosine(1618) in 23S rRNA + S-adenosyl-L-methionine = N(6)-methyladenosine(1618) in 23S rRNA + S-adenosyl-L-homocysteine + H(+). In terms of biological role, specifically methylates the adenine in position 1618 of 23S rRNA. The sequence is that of Ribosomal RNA large subunit methyltransferase F from Shewanella sediminis (strain HAW-EB3).